We begin with the raw amino-acid sequence, 348 residues long: Neuronal growth regulator 1 (348 aa).

The N-terminal stretch at 1-31 (MVLLAQGACCSNQWLAAVLLSLCSCLPAGQS) is a signal peptide. Ig-like C2-type domains follow at residues 32–128 (VDFP…VHLT), 133–215 (PKIY…RVIV), and 219–307 (PTIQ…LPLN). Cys-54 and Cys-112 form a disulfide bridge. Residues Asn-67 and Asn-149 are each glycosylated (N-linked (GlcNAc...) asparagine). 2 cysteine pairs are disulfide-bonded: Cys-154–Cys-197 and Cys-239–Cys-291. Position 181 is a phosphotyrosine (Tyr-181). N-linked (GlcNAc...) asparagine glycosylation is found at Asn-269, Asn-280, Asn-288, and Asn-301. Gly-318 carries the GPI-anchor amidated glycine lipid modification. A propeptide spans 319 to 348 (SACDLFSCWSLALTLSSVISIFYLKNAILQ) (removed in mature form).

Belongs to the immunoglobulin superfamily. IgLON family. As to expression, expressed in brain.

It is found in the cell membrane. Its function is as follows. May be involved in cell-adhesion. May function as a trans-neural growth-promoting factor in regenerative axon sprouting in the mammalian brain. The protein is Neuronal growth regulator 1 (Negr1) of Mus musculus (Mouse).